We begin with the raw amino-acid sequence, 215 residues long: Cytochrome b6 (215 aa).

A helical membrane pass occupies residues 32-52 (IFYCLGGITLTCFIVQVATGF). Cys-35 provides a ligand contact to heme c. 2 residues coordinate heme b: His-86 and His-100. Helical transmembrane passes span 90 to 110 (ASMMVLMMILHVFRVYLTGGF), 116 to 136 (LTWITGVVLAVLTVSFGVTGY), and 186 to 206 (LHTFVLPLLTAVFMLMHFLMI). Residues His-187 and His-202 each contribute to the heme b site.

It belongs to the cytochrome b family. PetB subfamily. As to quaternary structure, the 4 large subunits of the cytochrome b6-f complex are cytochrome b6, subunit IV (17 kDa polypeptide, PetD), cytochrome f and the Rieske protein, while the 4 small subunits are PetG, PetL, PetM and PetN. The complex functions as a dimer. Heme b serves as cofactor. The cofactor is heme c.

The protein localises to the plastid. It localises to the chloroplast thylakoid membrane. Its function is as follows. Component of the cytochrome b6-f complex, which mediates electron transfer between photosystem II (PSII) and photosystem I (PSI), cyclic electron flow around PSI, and state transitions. In Chara vulgaris (Common stonewort), this protein is Cytochrome b6.